The following is a 195-amino-acid chain: UPF0301 protein Bpro_1142 (195 aa).

It belongs to the UPF0301 (AlgH) family.

The protein is UPF0301 protein Bpro_1142 of Polaromonas sp. (strain JS666 / ATCC BAA-500).